The primary structure comprises 411 residues: Actin-like protein 9 (411 aa).

A compositionally biased stretch (basic and acidic residues) spans 1–15 (MDVNGPKRWEPHRSL). The disordered stretch occupies residues 1 to 23 (MDVNGPKRWEPHRSLDLNPRSTP).

This sequence belongs to the actin family. In terms of assembly, interacts with ACTL7A.

Its subcellular location is the cytoplasmic vesicle. It localises to the secretory vesicle. The protein resides in the acrosome. It is found in the cytoplasm. The protein localises to the cytoskeleton. Its subcellular location is the perinuclear theca. Its function is as follows. Testis-specic protein that plays an important role in fusion of proacrosomal vesicles and perinuclear theca formation. This chain is Actin-like protein 9 (Actl9), found in Rattus norvegicus (Rat).